The sequence spans 48 residues: Small, acid-soluble spore protein N (48 aa).

The tract at residues 1–48 (MGINKKDGQPQYAPSHLGTKPVKYKRNKGEKFHDKSNGHPIVMQTKGE) is disordered. The segment covering 27 to 37 (NKGEKFHDKSN) has biased composition (basic and acidic residues).

This sequence belongs to the SspN family.

Its subcellular location is the spore core. In Bacillus velezensis (strain DSM 23117 / BGSC 10A6 / LMG 26770 / FZB42) (Bacillus amyloliquefaciens subsp. plantarum), this protein is Small, acid-soluble spore protein N.